A 237-amino-acid polypeptide reads, in one-letter code: Ribonuclease PH (237 aa).

Phosphate contacts are provided by residues R86 and 124-126; that span reads GTR.

It belongs to the RNase PH family. As to quaternary structure, homohexameric ring arranged as a trimer of dimers.

The catalysed reaction is tRNA(n+1) + phosphate = tRNA(n) + a ribonucleoside 5'-diphosphate. Functionally, phosphorolytic 3'-5' exoribonuclease that plays an important role in tRNA 3'-end maturation. Removes nucleotide residues following the 3'-CCA terminus of tRNAs; can also add nucleotides to the ends of RNA molecules by using nucleoside diphosphates as substrates, but this may not be physiologically important. Probably plays a role in initiation of 16S rRNA degradation (leading to ribosome degradation) during starvation. This Pseudoalteromonas translucida (strain TAC 125) protein is Ribonuclease PH.